Reading from the N-terminus, the 664-residue chain is CRISPR-associated DNA-binding protein Cas12m (664 aa).

The interval 1–137 is recognition domain (REC1-N); it reads MKRVTITIDG…AKYRELIGSD (137 aa). Residues 138–212 are recognition domain (REC2); it reads EETAQMDTEI…AAKDRIRAAG (75 aa). Residues 213-270 form a recognition domain (REC1-C) region; that stretch reads NDIENLEKDRQAAVIKAYNNSGLWWGNYNAVLESYKKARIKALKDGAELKYHRFDGSG. The interval 271 to 390 is wedge domain (WED); the sequence is RFTNQIQGGM…VWSVVFTFTT (120 aa). The segment at 391 to 404 is linker; that stretch reads DCPTYDQRSSTGNR. Residues 405 to 618 are ruvC-I; it reads CGLNLGWKKQ…KNGTQIEQVS (214 aa). Residues 618-650 form a target nucleic-acid binding (TNB) region; it reads STASSATCSACKGKMEQVDGIMWRCRECRALVD. 4 residues coordinate Zn(2+): C625, C628, C642, and C645. The tract at residues 651–664 is ruvC-II; the sequence is QDINAAANLFREVL. Position 652 (D652) interacts with Mg(2+).

The protein belongs to the CRISPR-associated DNA-binding protein Cas12m family. Requires Mg(2+) as cofactor. Zn(2+) serves as cofactor.

CRISPR (clustered regularly interspaced short palindromic repeat), is an adaptive immune system that provides protection against mobile genetic elements (viruses, transposable elements and conjugative plasmids). CRISPR clusters contain sequences complementary to antecedent mobile elements and target invading nucleic acids. CRISPR clusters are transcribed and processed into CRISPR RNA (crRNA). Recognizes a short motif in the CRISPR repeat sequences (the 5' PAM or protospacer adjacent motif, 5'-CCN-3' in this organism) to help distinguish self versus nonself, as targets within the bacterial CRISPR locus do not have PAMs. Cas12m-crRNA binds DNA in a PAM-dependent, crRNA-guided fashion. DNA-binding probably inhibits transcription, leading to gene silencing. Upon expression in E.coli as a CRISPR region preferentially binds to its associated crRNA. Probably required for pre-crRNA processing to mature crRNA. This chain is CRISPR-associated DNA-binding protein Cas12m, found in Pelobacter propionicus (strain DSM 2379 / NBRC 103807 / OttBd1).